The primary structure comprises 436 residues: Septin-7 (436 aa).

The residue at position 2 (S2) is an N-acetylserine. At Y29 the chain carries Phosphotyrosine. Residues 46–315 (RGFEFTLMVV…ENYRSRKLAA (270 aa)) form the Septin-type G domain. An interaction with SEPTIN12 region spans residues 46–316 (RGFEFTLMVV…NYRSRKLAAV (271 aa)). The segment at 56–63 (GESGLGKS) is G1 motif. Residue 56-63 (GESGLGKS) participates in GTP binding. A Phosphoserine modification is found at S76. Residues T89, G115, and 194–202 (KADTLTPEE) contribute to the GTP site. The segment at 112–115 (DTPG) is G3 motif. The G4 motif stretch occupies residues 193–196 (AKAD). T227 bears the Phosphothreonine mark. The GTP site is built by G249 and R264. Residues 331 to 436 (TKSPLAQMEE…EKNKKKGKIF (106 aa)) adopt a coiled-coil conformation. S333 bears the Phosphoserine mark. Residue K372 is modified to N6-acetyllysine. A compositionally biased stretch (basic and acidic residues) spans 377-409 (ELQRRHEQMKKNLEAQHKELEEKRRQFEEEKAN). Residues 377–436 (ELQRRHEQMKKNLEAQHKELEEKRRQFEEEKANWEAQQRILEQQNSSRTLEKNKKKGKIF) are disordered. Residue S423 is modified to Phosphoserine. T425 carries the phosphothreonine modification.

Belongs to the TRAFAC class TrmE-Era-EngA-EngB-Septin-like GTPase superfamily. Septin GTPase family. Septins polymerize into heterooligomeric protein complexes that form filaments, and associate with cellular membranes, actin filaments and microtubules. GTPase activity is required for filament formation. Filaments are assembled from asymmetrical heterotrimers, composed of SEPTIN2, SEPTIN6 and SEPTIN7 that associate head-to-head to form a hexameric unit. Within the trimer, directly interacts with SEPTIN6, while interaction with SEPTIN2 seems indirect. In the absence of SEPTIN6, forms homodimers. Interacts directly with CENPE and links CENPE to septin filaments composed of SEPTIN2, SEPTIN6 and SEPTIN7. Interacts with SEPTIN5. Component of a septin core octameric complex consisting of SEPTIN12, SEPTIN7, SEPTIN6 and SEPTIN2 or SEPTIN4 in the order 12-7-6-2-2-6-7-12 or 12-7-6-4-4-6-7-12 and located in the sperm annulus; the SEPTIN12:SEPTIN7 association is mediated by the respective GTP-binding domains. Interacts with SEPTIN2, SEPTIN7, SEPTIN8, SEPTIN9 and SEPTIN11.

The protein resides in the cytoplasm. Its subcellular location is the chromosome. The protein localises to the centromere. It localises to the kinetochore. It is found in the cytoskeleton. The protein resides in the spindle. Its subcellular location is the cleavage furrow. The protein localises to the midbody. It localises to the cilium axoneme. It is found in the cell projection. The protein resides in the cilium. Its subcellular location is the flagellum. In terms of biological role, filament-forming cytoskeletal GTPase. Required for normal organization of the actin cytoskeleton. Required for normal progress through mitosis. Involved in cytokinesis. Required for normal association of CENPE with the kinetochore. Plays a role in ciliogenesis and collective cell movements. Forms a filamentous structure with SEPTIN12, SEPTIN6, SEPTIN2 and probably SEPTIN4 at the sperm annulus which is required for the structural integrity and motility of the sperm tail during postmeiotic differentiation. This is Septin-7 from Rattus norvegicus (Rat).